Here is a 595-residue protein sequence, read N- to C-terminus: Tectonic-3 (595 aa).

An N-terminal signal peptide occupies residues 1-22 (MCTLQLHLLLLVVLMLSETARP). Residues 23–62 (QPSSTARAFPTSWGLEPVTPEVPTSAPPDSSESPTPWTLS) form a disordered region. The Extracellular portion of the chain corresponds to 23–575 (QPSSTARAFP…ALSRGASVQK (553 aa)). Residues 49–62 (PPDSSESPTPWTLS) are compositionally biased toward polar residues. N-linked (GlcNAc...) asparagine glycosylation is found at Asn167 and Asn336. The helical transmembrane segment at 576 to 594 (DSLVLILCVLLLGLLNSQT) threads the bilayer. Lys595 is a topological domain (cytoplasmic).

The protein belongs to the tectonic family. In terms of assembly, part of the tectonic-like complex (also named B9 complex).

The protein localises to the membrane. Functionally, part of the tectonic-like complex which is required for tissue-specific ciliogenesis and may regulate ciliary membrane composition. May be involved in apoptosis regulation. Necessary for signal transduction through the sonic hedgehog (Shh) signaling pathway. This is Tectonic-3 (Tctn3) from Mus musculus (Mouse).